A 268-amino-acid polypeptide reads, in one-letter code: Ribosome maturation factor RimP (268 aa).

Disordered stretches follow at residues 1-41 (MGSA…GRGG) and 223-268 (LVEP…EMTR). A compositionally biased stretch (low complexity) spans 32 to 41 (PSGSARGRGG). The segment covering 248–257 (ESNDDGREAG) has biased composition (basic and acidic residues).

It belongs to the RimP family.

The protein localises to the cytoplasm. Its function is as follows. Required for maturation of 30S ribosomal subunits. The protein is Ribosome maturation factor RimP of Frankia casuarinae (strain DSM 45818 / CECT 9043 / HFP020203 / CcI3).